The chain runs to 26 residues: Hemocyanin subunit B (26 aa).

This sequence belongs to the tyrosinase family. Hemocyanin subfamily. In terms of tissue distribution, hemolymph.

The protein localises to the secreted. It localises to the extracellular space. Its function is as follows. Hemocyanins are copper-containing oxygen carriers occurring freely dissolved in the hemolymph of many mollusks and arthropods. The polypeptide is Hemocyanin subunit B (Carcinus maenas (Common shore crab)).